The chain runs to 301 residues: MTLSRDDAAQVAKVLSEALPYIRRFVGKTLVIKYGGNAMESEELKAGFARDVVLMKAVGINPVVVHGGGPQIGDLLKRLSIESHFIDGMRVTDAATMDVVEMVLGGQVNKDIVNLINRHGGSAIGLTGKDAELIRAKKLTVTRQTPEMTKPEIIDIGHVGEVTGVNVGLLNMLVKGDFIPVIAPIGVGSNGESYNINADLVAGKVAEALKAEKLMLLTNIAGLMDKQGQVLTGLSTEQVNELIADGTIYGGMLPKIRCALEAVQGGVTSAHIIDGRVPNAVLLEIFTDSGVGTLISNRKRH.

Substrate is bound by residues 68–69, Arg-90, and Asn-195; that span reads GG.

This sequence belongs to the acetylglutamate kinase family. ArgB subfamily.

Its subcellular location is the cytoplasm. It carries out the reaction N-acetyl-L-glutamate + ATP = N-acetyl-L-glutamyl 5-phosphate + ADP. It functions in the pathway amino-acid biosynthesis; L-arginine biosynthesis; N(2)-acetyl-L-ornithine from L-glutamate: step 2/4. Functionally, catalyzes the ATP-dependent phosphorylation of N-acetyl-L-glutamate. The sequence is that of Acetylglutamate kinase from Pseudomonas aeruginosa (strain LESB58).